A 286-amino-acid chain; its full sequence is Flagellar filament 31.3 kDa core protein (286 aa).

This sequence belongs to the bacterial flagellin family. The core of the flagellum consists of several antigenically related polypeptides. Glycosylated. Glycosylation is not essential for motility.

It is found in the periplasmic flagellum. Its subcellular location is the periplasm. Functionally, component of the core of the flagella. The chain is Flagellar filament 31.3 kDa core protein (flaB2) from Treponema maltophilum.